We begin with the raw amino-acid sequence, 459 residues long: Mitochondrial distribution and morphology protein 34 (459 aa).

One can recognise an SMP-LTD domain in the interval 1–190; the sequence is MSFRFNEAVF…LPSLIFNTSQ (190 aa). Over residues 338 to 347 the composition is skewed to basic and acidic residues; the sequence is RSNSNDDNAK. Residues 338-375 form a disordered region; the sequence is RSNSNDDNAKPRRRKIKCKKTRTPSNLQSQGEQAVDDS. Basic residues predominate over residues 348 to 359; that stretch reads PRRRKIKCKKTR.

It belongs to the MDM34 family. In terms of assembly, component of the ER-mitochondria encounter structure (ERMES) or MDM complex, composed of MMM1, MDM10, MDM12 and MDM34. Post-translationally, ubiquitinated by a SCF (SKP1-CUL1-F-box protein) E3 ubiquitin-protein ligase complex containing the F-box protein MDM30. Ubiquitination is important for mitochondrial integrity.

It is found in the mitochondrion outer membrane. Functionally, component of the ERMES/MDM complex, which serves as a molecular tether to connect the endoplasmic reticulum (ER) and mitochondria. Components of this complex are involved in the control of mitochondrial shape and protein biogenesis, and function in nonvesicular lipid trafficking between the ER and mitochondria. MDM34 is required for the interaction of the ER-resident membrane protein MMM1 and the outer mitochondrial membrane-resident beta-barrel protein MDM10. The sequence is that of Mitochondrial distribution and morphology protein 34 from Saccharomyces cerevisiae (strain YJM789) (Baker's yeast).